Reading from the N-terminus, the 459-residue chain is Cysteine--tRNA ligase (459 aa).

Cys27 provides a ligand contact to Zn(2+). Residues Pro29 to His39 carry the 'HIGH' region motif. Zn(2+)-binding residues include Cys202, His231, and Glu235. A 'KMSKS' region motif is present at residues Lys263–Ser267. Lys266 contributes to the ATP binding site.

It belongs to the class-I aminoacyl-tRNA synthetase family. As to quaternary structure, monomer. Zn(2+) is required as a cofactor.

Its subcellular location is the cytoplasm. The enzyme catalyses tRNA(Cys) + L-cysteine + ATP = L-cysteinyl-tRNA(Cys) + AMP + diphosphate. The polypeptide is Cysteine--tRNA ligase (Campylobacter fetus subsp. fetus (strain 82-40)).